The chain runs to 134 residues: Profilin-2 (134 aa).

C13 and C118 are disulfide-bonded. An Involved in PIP2 interaction motif is present at residues 84-100; that stretch reads AVTRGKKGTGGITIKKT. Phosphothreonine is present on T114.

This sequence belongs to the profilin family. As to quaternary structure, occurs in many kinds of cells as a complex with monomeric actin in a 1:1 ratio. In terms of processing, phosphorylated by MAP kinases.

It is found in the cytoplasm. The protein resides in the cytoskeleton. Functionally, binds to actin and affects the structure of the cytoskeleton. At high concentrations, profilin prevents the polymerization of actin, whereas it enhances it at low concentrations. The chain is Profilin-2 from Olea europaea (Common olive).